The following is a 659-amino-acid chain: DNA ligase (659 aa).

NAD(+) is bound by residues 32–36, 81–82, and Glu110; these read DAEYD and SL. Lys112 serves as the catalytic N6-AMP-lysine intermediate. NAD(+) is bound by residues Arg133, Glu168, Lys284, and Lys308. Zn(2+)-binding residues include Cys402, Cys405, Cys420, and Cys425. The BRCT domain occupies 582–659; the sequence is AKPQIFAGKS…SEEEFAELLP (78 aa).

The protein belongs to the NAD-dependent DNA ligase family. LigA subfamily. It depends on Mg(2+) as a cofactor. The cofactor is Mn(2+).

It catalyses the reaction NAD(+) + (deoxyribonucleotide)n-3'-hydroxyl + 5'-phospho-(deoxyribonucleotide)m = (deoxyribonucleotide)n+m + AMP + beta-nicotinamide D-nucleotide.. Functionally, DNA ligase that catalyzes the formation of phosphodiester linkages between 5'-phosphoryl and 3'-hydroxyl groups in double-stranded DNA using NAD as a coenzyme and as the energy source for the reaction. It is essential for DNA replication and repair of damaged DNA. In Desulfitobacterium hafniense (strain DSM 10664 / DCB-2), this protein is DNA ligase.